Reading from the N-terminus, the 303-residue chain is ATP phosphoribosyltransferase (303 aa).

This sequence belongs to the ATP phosphoribosyltransferase family. Long subfamily. The cofactor is Mg(2+).

The protein localises to the cytoplasm. It carries out the reaction 1-(5-phospho-beta-D-ribosyl)-ATP + diphosphate = 5-phospho-alpha-D-ribose 1-diphosphate + ATP. It participates in amino-acid biosynthesis; L-histidine biosynthesis; L-histidine from 5-phospho-alpha-D-ribose 1-diphosphate: step 1/9. Feedback inhibited by histidine. Functionally, catalyzes the condensation of ATP and 5-phosphoribose 1-diphosphate to form N'-(5'-phosphoribosyl)-ATP (PR-ATP). Has a crucial role in the pathway because the rate of histidine biosynthesis seems to be controlled primarily by regulation of HisG enzymatic activity. This is ATP phosphoribosyltransferase from Haemophilus influenzae (strain PittEE).